Here is a 215-residue protein sequence, read N- to C-terminus: Putative glycosyltransferase ALG1L2 (215 aa).

Residues 40–66 (PFRARSEPEDPDTERSAFTERDSGSGL) form a disordered region. Over residues 43–62 (ARSEPEDPDTERSAFTERDS) the composition is skewed to basic and acidic residues.

This sequence belongs to the glycosyltransferase group 1 family.

In terms of biological role, putative glycosyltransferase. The sequence is that of Putative glycosyltransferase ALG1L2 (ALG1L2) from Homo sapiens (Human).